The chain runs to 664 residues: 26S rRNA (cytosine-C(5))-methyltransferase nsun-1 (664 aa).

A disordered region spans residues 1–105; sequence MAIVKKKKVS…DDSDAGDHLP (105 aa). Basic residues predominate over residues 38 to 52; it reads PKKKKLVKKVKKSAK. Positions 53-68 are enriched in basic and acidic residues; the sequence is KAHEEEPIEQVEKLQL. A compositionally biased stretch (acidic residues) spans 84-99; that stretch reads SDDEDLRDDYSDDDSD. Residues 313 to 319, Asp-337, and Asp-382 contribute to the S-adenosyl-L-methionine site; that span reads CSAPGGK. Cys-439 serves as the catalytic Nucleophile. Residues 513-664 form a disordered region; that stretch reads KMSKQGVMEK…RRKKMLAKQQ (152 aa). Residues 519 to 528 show a composition bias toward basic and acidic residues; that stretch reads VMEKEKEKAA. The span at 541–550 shows a compositional bias: acidic residues; it reads EASESSDDEE. Basic residues predominate over residues 563-572; the sequence is KPAKKQQQKK. Over residues 606–618 the composition is skewed to basic and acidic residues; sequence KAAEKQAAVKEDD. 2 stretches are compositionally biased toward basic residues: residues 627 to 644 and 652 to 664; these read KRAK…KRAA and VKNR…AKQQ.

Belongs to the class I-like SAM-binding methyltransferase superfamily. RsmB/NOP family.

The protein localises to the nucleus. It localises to the nucleolus. It carries out the reaction a cytidine in 26S rRNA + S-adenosyl-L-methionine = a 5-methylcytidine in 26S rRNA + S-adenosyl-L-homocysteine + H(+). In terms of biological role, methyltransferase which methylates the carbon-5 position of cytosine 2982 to 5-methylcytosine (m5C2982) in 26S rRNA. May play a role in the translation of leucine and proline codons. May be required for the translation of specific mRNAs such as mRNAs involved in gonad development, collagen production and cuticle integrity. Plays a role in ensuring the correct localization of the germline-specific protein gld-1 during development. Not required for pre-rRNA processing, the production of mature 5S, 5.8S, 18S or 26S rRNAs or global translation. Plays a role in positively regulating fertility. The sequence is that of 26S rRNA (cytosine-C(5))-methyltransferase nsun-1 from Caenorhabditis elegans.